The sequence spans 220 residues: MSHSPDLKGSSFTLSVLHLCNNSVDTAIEFVKEKVEQAPAFFAAAPVVINIANVEGDLDFVALKQGISQAGFIPVGITGAKDKRTQNLASDAGFAIMSASKSPTQAPAKMAPTKIVRTPIRSGQQIYAKDGDLVILNHVSAGAEVIADGSIHIHGTLRGRAIAGASGQKEARIICHDLQAELISIAGNYWLSDQIERQFWQQKVMLSLVDESLHLEALTQ.

This sequence belongs to the MinC family. As to quaternary structure, interacts with MinD and FtsZ.

In terms of biological role, cell division inhibitor that blocks the formation of polar Z ring septums. Rapidly oscillates between the poles of the cell to destabilize FtsZ filaments that have formed before they mature into polar Z rings. Prevents FtsZ polymerization. The protein is Probable septum site-determining protein MinC of Vibrio vulnificus (strain CMCP6).